Reading from the N-terminus, the 496-residue chain is Membrane-bound lytic murein transglycosylase F (496 aa).

The signal sequence occupies residues 1–31 (MPIFSTRVLTYLRCIFRLFIGLTLLLTLVGC). The non-LT domain stretch occupies residues 32–271 (DFYTPSSQLE…KLDEKYFGHV (240 aa)). The LT domain stretch occupies residues 273 to 496 (NFDFVDTRTF…AEVVKQITLR (224 aa)). Residue E316 is part of the active site. Residues 464-486 (HRREELDDDDSSEPPSAERPTVI) form a disordered region.

It in the N-terminal section; belongs to the bacterial solute-binding protein 3 family. This sequence in the C-terminal section; belongs to the transglycosylase Slt family.

It is found in the cell outer membrane. It catalyses the reaction Exolytic cleavage of the (1-&gt;4)-beta-glycosidic linkage between N-acetylmuramic acid (MurNAc) and N-acetylglucosamine (GlcNAc) residues in peptidoglycan, from either the reducing or the non-reducing ends of the peptidoglycan chains, with concomitant formation of a 1,6-anhydrobond in the MurNAc residue.. Its function is as follows. Murein-degrading enzyme that degrades murein glycan strands and insoluble, high-molecular weight murein sacculi, with the concomitant formation of a 1,6-anhydromuramoyl product. Lytic transglycosylases (LTs) play an integral role in the metabolism of the peptidoglycan (PG) sacculus. Their lytic action creates space within the PG sacculus to allow for its expansion as well as for the insertion of various structures such as secretion systems and flagella. This chain is Membrane-bound lytic murein transglycosylase F, found in Aeromonas hydrophila subsp. hydrophila (strain ATCC 7966 / DSM 30187 / BCRC 13018 / CCUG 14551 / JCM 1027 / KCTC 2358 / NCIMB 9240 / NCTC 8049).